The primary structure comprises 117 residues: UPF0642 protein C32H8.05 (117 aa).

The segment at Asp-39–Lys-117 is disordered. Residues Lys-93–Lys-106 are compositionally biased toward basic residues. The span at Asn-107–Lys-117 shows a compositional bias: low complexity.

Belongs to the UPF0642 family.

The protein resides in the nucleus. Its subcellular location is the nucleolus. This is UPF0642 protein C32H8.05 from Schizosaccharomyces pombe (strain 972 / ATCC 24843) (Fission yeast).